A 331-amino-acid chain; its full sequence is Putative phosphoribosylaminoimidazole-succinocarboxamide synthase (331 aa).

This sequence belongs to the SAICAR synthetase family. Highly divergent.

It catalyses the reaction 5-amino-1-(5-phospho-D-ribosyl)imidazole-4-carboxylate + L-aspartate + ATP = (2S)-2-[5-amino-1-(5-phospho-beta-D-ribosyl)imidazole-4-carboxamido]succinate + ADP + phosphate + 2 H(+). It functions in the pathway purine metabolism; IMP biosynthesis via de novo pathway; 5-amino-1-(5-phospho-D-ribosyl)imidazole-4-carboxamide from 5-amino-1-(5-phospho-D-ribosyl)imidazole-4-carboxylate: step 1/2. This Archaeoglobus fulgidus (strain ATCC 49558 / DSM 4304 / JCM 9628 / NBRC 100126 / VC-16) protein is Putative phosphoribosylaminoimidazole-succinocarboxamide synthase (purC).